A 413-amino-acid chain; its full sequence is Branched-chain-amino-acid aminotransferase 3, chloroplastic (413 aa).

Residues 1-60 constitute a chloroplast transit peptide; it reads MERAAILPSVNQNYLLCPSRAFSTRLHSSTRNLSPPSFASIKLQHSSSSVSSNGGISLTR. N6-(pyridoxal phosphate)lysine is present on Lys-259.

Belongs to the class-IV pyridoxal-phosphate-dependent aminotransferase family. Pyridoxal 5'-phosphate serves as cofactor. Expressed in the phloem cells.

It localises to the plastid. The protein localises to the chloroplast. The enzyme catalyses L-leucine + 2-oxoglutarate = 4-methyl-2-oxopentanoate + L-glutamate. It catalyses the reaction L-isoleucine + 2-oxoglutarate = (S)-3-methyl-2-oxopentanoate + L-glutamate. The catalysed reaction is L-valine + 2-oxoglutarate = 3-methyl-2-oxobutanoate + L-glutamate. It carries out the reaction a 2-oxocarboxylate + L-methionine = 4-methylsulfanyl-2-oxobutanoate + an L-alpha-amino acid. It functions in the pathway amino-acid biosynthesis; L-isoleucine biosynthesis; L-isoleucine from 2-oxobutanoate: step 4/4. Its pathway is amino-acid biosynthesis; L-leucine biosynthesis; L-leucine from 3-methyl-2-oxobutanoate: step 4/4. It participates in amino-acid biosynthesis; L-valine biosynthesis; L-valine from pyruvate: step 4/4. With respect to regulation, inhibited by Ser- or Thr-derived imine. Functionally, converts 2-oxo acids to branched-chain amino acids. Acts on leucine, isoleucine and valine. Also involved in methionine chain elongation cycle of aliphatic glucosinolate formation. Catalyzes the conversion of 5-methylthiopentyl-2-oxo and 6-methylthiohexyl-2-oxo acids to their respective Met derivatives, homomethionine and dihomo-methionine, respectively. This Arabidopsis thaliana (Mouse-ear cress) protein is Branched-chain-amino-acid aminotransferase 3, chloroplastic.